The chain runs to 152 residues: Clitocypin-2 (152 aa).

The protein belongs to the protease inhibitor I48 family. In terms of assembly, homodimer. As to expression, expressed in all analyzed tissues, but expression was higher in the pileus and in the lower part of the stipe.

Functionally, binds and inhibits cysteine proteinases. Inhibits most strongly papain and cathepsin L, more weakly bromelain and cathepsin B while it is completely ineffective against cathepsin H. This is Clitocypin-2 (clt2) from Clitocybe nebularis (Clouded agaric).